The primary structure comprises 365 residues: Peptide chain release factor 2 (365 aa).

Residue Gln251 is modified to N5-methylglutamine.

This sequence belongs to the prokaryotic/mitochondrial release factor family. Methylated by PrmC. Methylation increases the termination efficiency of RF2.

Its subcellular location is the cytoplasm. Functionally, peptide chain release factor 2 directs the termination of translation in response to the peptide chain termination codons UGA and UAA. The sequence is that of Peptide chain release factor 2 from Campylobacter jejuni (strain RM1221).